The primary structure comprises 392 residues: 3-ketoacyl-CoA thiolase (392 aa).

C95 (acyl-thioester intermediate) is an active-site residue. Active-site proton acceptor residues include H347 and C377.

This sequence belongs to the thiolase-like superfamily. Thiolase family. As to quaternary structure, heterotetramer of two alpha chains (FadB) and two beta chains (FadA).

It localises to the cytoplasm. The catalysed reaction is an acyl-CoA + acetyl-CoA = a 3-oxoacyl-CoA + CoA. Its pathway is lipid metabolism; fatty acid beta-oxidation. Its function is as follows. Catalyzes the final step of fatty acid oxidation in which acetyl-CoA is released and the CoA ester of a fatty acid two carbons shorter is formed. This Chromohalobacter salexigens (strain ATCC BAA-138 / DSM 3043 / CIP 106854 / NCIMB 13768 / 1H11) protein is 3-ketoacyl-CoA thiolase.